We begin with the raw amino-acid sequence, 364 residues long: Cyclin-D3-2 (364 aa).

The disordered stretch occupies residues 331 to 364; that stretch reads PPGRPIKRGAAAATTADPLPADEESRDAWPPYAA. The segment covering 340-349 has biased composition (low complexity); the sequence is AAAATTADPL.

It belongs to the cyclin family. Cyclin D subfamily.

The chain is Cyclin-D3-2 (CYCD3-2) from Oryza sativa subsp. japonica (Rice).